We begin with the raw amino-acid sequence, 695 residues long: Lasso peptide isopeptidase AtxE2 (695 aa).

The signal sequence occupies residues 1 to 30 (MRSSKIRCPGAIRVGTLVTAFGCLPHVAFA). Intrachain disulfides connect C296–C301 and C354–C363. S527 (nucleophile) is an active-site residue. A disulfide bridge connects residues C551 and C552. Active-site charge relay system residues include E610 and H638.

It localises to the cytoplasm. Lasso peptide isopeptidase that specifically hydrolyzes Astexin-2 and Astexin-3, converting them to linear peptides. Has only a few specific contacts with substrates, because it recognizes Astexin knotted structure (principally the loop structure). Its binding to lasso peptides opens them to expose the isopeptide bonds for hydrolysis. In Asticcacaulis excentricus (strain ATCC 15261 / DSM 4724 / KCTC 12464 / NCIMB 9791 / VKM B-1370 / CB 48), this protein is Lasso peptide isopeptidase AtxE2.